Here is an 82-residue protein sequence, read N- to C-terminus: Large ribosomal subunit protein uL23 (82 aa).

The protein belongs to the universal ribosomal protein uL23 family. In terms of assembly, part of the 50S ribosomal subunit. Contacts protein L29.

In terms of biological role, binds to 23S rRNA. One of the proteins that surrounds the polypeptide exit tunnel on the outside of the ribosome. This is Large ribosomal subunit protein uL23 from Methanococcoides burtonii (strain DSM 6242 / NBRC 107633 / OCM 468 / ACE-M).